Reading from the N-terminus, the 452-residue chain is Retinoid-inducible serine carboxypeptidase (452 aa).

Residues 1 to 26 (MELALRRSPVPRWLLLLPLLLGLNAG) form the signal peptide. N-linked (GlcNAc...) asparagine glycans are attached at residues Asn-64 and Asn-126. The active site involves Ser-167. Asn-362 carries N-linked (GlcNAc...) asparagine glycosylation. Catalysis depends on residues Asp-371 and His-431.

The protein belongs to the peptidase S10 family.

It is found in the secreted. Functionally, may be involved in vascular wall and kidney homeostasis. This Homo sapiens (Human) protein is Retinoid-inducible serine carboxypeptidase (SCPEP1).